The following is a 377-amino-acid chain: Carbamoyl phosphate synthase small chain (377 aa).

A CPSase region spans residues 1 to 186; sequence MSTPALLVLA…LGKGFVTPDE (186 aa). Serine 47, glycine 238, and glycine 240 together coordinate L-glutamine. A Glutamine amidotransferase type-1 domain is found at 190-377; sequence HVVAYDFGVK…IGNMKAAKRA (188 aa). The active-site Nucleophile is cysteine 266. Residues leucine 267, glutamine 270, asparagine 308, glycine 310, and phenylalanine 311 each coordinate L-glutamine. Active-site residues include histidine 350 and glutamate 352.

This sequence belongs to the CarA family. As to quaternary structure, composed of two chains; the small (or glutamine) chain promotes the hydrolysis of glutamine to ammonia, which is used by the large (or ammonia) chain to synthesize carbamoyl phosphate. Tetramer of heterodimers (alpha,beta)4.

The enzyme catalyses hydrogencarbonate + L-glutamine + 2 ATP + H2O = carbamoyl phosphate + L-glutamate + 2 ADP + phosphate + 2 H(+). The catalysed reaction is L-glutamine + H2O = L-glutamate + NH4(+). The protein operates within amino-acid biosynthesis; L-arginine biosynthesis; carbamoyl phosphate from bicarbonate: step 1/1. It participates in pyrimidine metabolism; UMP biosynthesis via de novo pathway; (S)-dihydroorotate from bicarbonate: step 1/3. Small subunit of the glutamine-dependent carbamoyl phosphate synthetase (CPSase). CPSase catalyzes the formation of carbamoyl phosphate from the ammonia moiety of glutamine, carbonate, and phosphate donated by ATP, constituting the first step of 2 biosynthetic pathways, one leading to arginine and/or urea and the other to pyrimidine nucleotides. The small subunit (glutamine amidotransferase) binds and cleaves glutamine to supply the large subunit with the substrate ammonia. The protein is Carbamoyl phosphate synthase small chain of Neisseria meningitidis serogroup B (strain ATCC BAA-335 / MC58).